Consider the following 385-residue polypeptide: Chaperone protein DnaJ (385 aa).

Residues 5 to 70 (DYYEILEITR…SKRQIYDKYG (66 aa)) enclose the J domain. Residues 136–213 (GCKKEIHNSF…CKGSGFEISE (78 aa)) form a CR-type zinc finger. Zn(2+)-binding residues include C149, C152, C165, C168, C187, C190, C201, and C204. CXXCXGXG motif repeat units lie at residues 149 to 156 (CSDCKGTG), 165 to 172 (CKDCGGKG), 187 to 194 (CPTCKGEG), and 201 to 208 (CSKCKGSG).

It belongs to the DnaJ family. In terms of assembly, homodimer. The cofactor is Zn(2+).

It localises to the cytoplasm. Functionally, participates actively in the response to hyperosmotic and heat shock by preventing the aggregation of stress-denatured proteins and by disaggregating proteins, also in an autonomous, DnaK-independent fashion. Unfolded proteins bind initially to DnaJ; upon interaction with the DnaJ-bound protein, DnaK hydrolyzes its bound ATP, resulting in the formation of a stable complex. GrpE releases ADP from DnaK; ATP binding to DnaK triggers the release of the substrate protein, thus completing the reaction cycle. Several rounds of ATP-dependent interactions between DnaJ, DnaK and GrpE are required for fully efficient folding. Also involved, together with DnaK and GrpE, in the DNA replication of plasmids through activation of initiation proteins. The chain is Chaperone protein DnaJ from Helicobacter hepaticus (strain ATCC 51449 / 3B1).